Consider the following 190-residue polypeptide: RING finger protein 227 (190 aa).

The RING-type zinc finger occupies 18-81; that stretch reads CNICYRPFNL…RRVVTCPFCR (64 aa). Positions 111 to 145 are disordered; that stretch reads KCERDEAGNPAKESSDADGEAEEEGESEKGAGPRS. Positions 126–136 are enriched in acidic residues; sequence DADGEAEEEGE.

In Homo sapiens (Human), this protein is RING finger protein 227.